Consider the following 121-residue polypeptide: Movement protein TGBp3 (121 aa).

Residues 1 to 40 (MHYPTEADTSTGPNPSATSAPVRPRHVTPSLSPSSSSSPS) form a disordered region. Residues 1–43 (MHYPTEADTSTGPNPSATSAPVRPRHVTPSLSPSSSSSPSPDS) lie on the Lumenal side of the membrane. A compositionally biased stretch (polar residues) spans 7-19 (ADTSTGPNPSATS). Low complexity predominate over residues 29–40 (PSLSPSSSSSPS). Residues 44-64 (FYYFLAAAVILTAALAAALLT) form a helical membrane-spanning segment. Topologically, residues 65–121 (PNPGCTIVITGHTTIIQGSCPIPPQLVLAAHPRGLSLEQYLKFTNTLPDGSQHRSHR) are cytoplasmic.

This sequence belongs to the Tymovirales TGBp3 protein family.

The protein localises to the host endoplasmic reticulum membrane. Plays a role in viral cell-to-cell propagation, by facilitating genome transport to neighboring plant cells through plasmosdesmata. May induce the formation of granular vesicles derived from the Endoplasmic reticulum, which align on actin filaments. In Plantago asiatica (P1AMV), this protein is Movement protein TGBp3.